Here is a 95-residue protein sequence, read N- to C-terminus: Small ribosomal subunit protein uS19 (95 aa).

It belongs to the universal ribosomal protein uS19 family.

Its function is as follows. Protein S19 forms a complex with S13 that binds strongly to the 16S ribosomal RNA. This Bdellovibrio bacteriovorus (strain ATCC 15356 / DSM 50701 / NCIMB 9529 / HD100) protein is Small ribosomal subunit protein uS19.